The following is a 275-amino-acid chain: Phosphate import ATP-binding protein PstB (275 aa).

The ABC transporter domain maps to 29-270 (LEIKDLDLYY…PNKKKTEDYI (242 aa)). 61-68 (GPSGCGKS) contacts ATP.

This sequence belongs to the ABC transporter superfamily. Phosphate importer (TC 3.A.1.7) family. In terms of assembly, the complex is composed of two ATP-binding proteins (PstB), two transmembrane proteins (PstC and PstA) and a solute-binding protein (PstS).

Its subcellular location is the cell inner membrane. It carries out the reaction phosphate(out) + ATP + H2O = ADP + 2 phosphate(in) + H(+). In terms of biological role, part of the ABC transporter complex PstSACB involved in phosphate import. Responsible for energy coupling to the transport system. The polypeptide is Phosphate import ATP-binding protein PstB (Pseudoalteromonas translucida (strain TAC 125)).